Here is a 149-residue protein sequence, read N- to C-terminus: Arginine repressor (149 aa).

The protein belongs to the ArgR family.

The protein resides in the cytoplasm. The protein operates within amino-acid biosynthesis; L-arginine biosynthesis [regulation]. In terms of biological role, regulates arginine biosynthesis genes. The chain is Arginine repressor from Halalkalibacterium halodurans (strain ATCC BAA-125 / DSM 18197 / FERM 7344 / JCM 9153 / C-125) (Bacillus halodurans).